Reading from the N-terminus, the 218-residue chain is Cytochrome b6 (218 aa).

The chain crosses the membrane as a helical span at residues Ile35–Phe55. Cys38 is a heme c binding site. The heme b site is built by His89 and His103. Helical transmembrane passes span Ala93 to Phe113, Leu119 to Tyr139, and Leu189 to Ile209. Residues His190 and His205 each contribute to the heme b site.

It belongs to the cytochrome b family. PetB subfamily. In terms of assembly, the 4 large subunits of the cytochrome b6-f complex are cytochrome b6, subunit IV (17 kDa polypeptide, PetD), cytochrome f and the Rieske protein, while the 4 small subunits are PetG, PetL, PetM and PetN. The complex functions as a dimer. Heme b serves as cofactor. Requires heme c as cofactor.

It is found in the cellular thylakoid membrane. Functionally, component of the cytochrome b6-f complex, which mediates electron transfer between photosystem II (PSII) and photosystem I (PSI), cyclic electron flow around PSI, and state transitions. The polypeptide is Cytochrome b6 (Prochlorococcus marinus (strain MIT 9301)).